Here is a 518-residue protein sequence, read N- to C-terminus: 2-isopropylmalate synthase (518 aa).

Residues 5 to 268 (IIIFDTTLRD…DTRINTQEIH (264 aa)) enclose the Pyruvate carboxyltransferase domain. Mn(2+)-binding residues include D14, H202, H204, and N238. Residues 393–518 (TLDVITSQCI…DLKLHKIAGV (126 aa)) form a regulatory domain region.

It belongs to the alpha-IPM synthase/homocitrate synthase family. LeuA type 1 subfamily. As to quaternary structure, homodimer. Mn(2+) serves as cofactor.

It is found in the cytoplasm. It carries out the reaction 3-methyl-2-oxobutanoate + acetyl-CoA + H2O = (2S)-2-isopropylmalate + CoA + H(+). It functions in the pathway amino-acid biosynthesis; L-leucine biosynthesis; L-leucine from 3-methyl-2-oxobutanoate: step 1/4. In terms of biological role, catalyzes the condensation of the acetyl group of acetyl-CoA with 3-methyl-2-oxobutanoate (2-ketoisovalerate) to form 3-carboxy-3-hydroxy-4-methylpentanoate (2-isopropylmalate). This Pasteurella multocida (strain Pm70) protein is 2-isopropylmalate synthase.